The following is a 926-amino-acid chain: Peripheral plasma membrane protein CASK (926 aa).

A Protein kinase domain is found at 12-276 (YELCEVIGKG…VYEALNHPWL (265 aa)). Residues 18–26 (IGKGPFSVV) and Lys-41 contribute to the ATP site. Ser-51 is subject to Phosphoserine. Asp-141 is a catalytic residue. Ser-151 and Ser-155 each carry phosphoserine; by autocatalysis. The residue at position 182 (Thr-182) is a Phosphothreonine. Residues Lys-192 and Ser-313 each carry the phosphoserine modification. The calmodulin-binding stretch occupies residues 305–315 (KGAVLAAVSSH). L27 domains follow at residues 343 to 398 (AERA…SPQI) and 402 to 455 (PSDA…YSDE). Positions 482–909 (MENVTRVRLV…DETIRHLEEA (428 aa)) are required for interaction with NRXN1 (via C-terminal tail). One can recognise a PDZ domain in the interval 489-564 (RLVQFQKNTD…MLREMRGSIT (76 aa)). Residues Tyr-571 and Ser-577 each carry the phosphoserine modification. The tract at residues 574–610 (QSSSCERDSPSTSRQSPANGHSSTNNSVSDLPSTTQP) is disordered. The region spanning 612 to 682 (GRQIYVRAQF…PSPELQEWRV (71 aa)) is the SH3 domain. Residues 739–911 (RKTLVLLGAH…TIRHLEEAVE (173 aa)) enclose the Guanylate kinase-like domain.

This sequence in the N-terminal section; belongs to the protein kinase superfamily. CAMK Ser/Thr protein kinase family. CaMK subfamily. The protein belongs to the MAGUK family. CASK and LIN7 form two mutually exclusive tripartite complexes with APBA1 or CASKIN1. Component of the brain-specific heterotrimeric complex (LIN-10-LIN-2-LIN-7 complex) composed of at least APBA1, CASK, and LIN7, which associates with the motor protein KIF17 to transport vesicles along microtubules. Forms a heterotrimeric complex with DLG1 and LIN7B via their L27 domains. Identified in a complex with ACTN4, IQGAP1, MAGI2, NPHS1, SPTAN1 and SPTBN1. Part of a complex containing CASK, TBR1 and TSPYL2. Interacts with WHRN. Interacts (via the PDZ, SH3 and guanylate kinase-like domains) with NRXN1 (via C-terminus). Interacts with CASKIN1, APBA1, LIN7(A/B/C) and L27 domain of DLG1 and isoform 2 of DLG4. Interacts with FCHSD2. Interacts with KIRREL3. Interacts with TBR1. Interacts with TSPYL2. It depends on Unlike other protein kinases, does not require a divalent cation such as magnesium for catalytic activity. as a cofactor. Ubiquitous. Expression is significantly greater in brain relative to kidney, lung, and liver and in fetal brain and kidney relative to lung and liver.

It is found in the nucleus. Its subcellular location is the cytoplasm. The protein resides in the cell membrane. It catalyses the reaction L-seryl-[protein] + ATP = O-phospho-L-seryl-[protein] + ADP + H(+). The catalysed reaction is L-threonyl-[protein] + ATP = O-phospho-L-threonyl-[protein] + ADP + H(+). Its activity is regulated as follows. Differs from archetypal CaMK members in that the kinase domain exhibits a constitutively active conformation and the autoinhibitory region does not engage in direct contact with the ATP-binding cleft, although it still binds Ca(2+)/CAM. Multidomain scaffolding Mg(2+)-independent protein kinase that catalyzes the phosphotransfer from ATP to proteins such as NRXN1, and plays a role in synaptic transmembrane protein anchoring and ion channel trafficking. Contributes to neural development and regulation of gene expression via interaction with the transcription factor TBR1. Binds to cell-surface proteins, including amyloid precursor protein, neurexins and syndecans. May mediate a link between the extracellular matrix and the actin cytoskeleton via its interaction with syndecan and with the actin/spectrin-binding protein 4.1. Component of the LIN-10-LIN-2-LIN-7 complex, which associates with the motor protein KIF17 to transport vesicles containing N-methyl-D-aspartate (NMDA) receptor subunit NR2B along microtubules. This Homo sapiens (Human) protein is Peripheral plasma membrane protein CASK.